The primary structure comprises 949 residues: Collagen alpha-2(I) chain (949 aa).

The tract at residues 1–949 is disordered; the sequence is SGGFDFSFLP…FGYEGDFYRA (949 aa). A 4-hydroxyproline mark is found at proline 10, proline 13, proline 34, and proline 40. Residues 27-66 are compositionally biased toward low complexity; sequence LMGPRGPPGASGAPGPQGFQGPAGEPGEPGQTGPAGARGP. The residue at position 95 (lysine 95) is a 5-hydroxylysine; alternate. The O-linked (Gal...) hydroxylysine; alternate glycan is linked to lysine 95. Low complexity-rich tracts occupy residues 147–162 and 208–229; these read SVGP…SAGP and PGAN…AGAP. Gly residues predominate over residues 263–272; sequence GESGGKGEPG. The segment covering 273–283 has biased composition (low complexity); sequence SAGPQGPPGSS. A compositionally biased stretch (gly residues) spans 292-313; the sequence is NGEGSTGPTGPPGLRGGPGSRG. Residues proline 348 and proline 351 each carry the 4-hydroxyproline modification. The segment covering 377–396 has biased composition (low complexity); sequence LPGIDGRPGPIGPAGARGEA. A compositionally biased stretch (gly residues) spans 435 to 444; the sequence is GVQGGKGEQG. Composition is skewed to low complexity over residues 490–507 and 519–529; these read PGES…SRGP and EPGVVGAPGTA. Gly residues predominate over residues 530 to 539; the sequence is GPAGSGGLPG. Composition is skewed to low complexity over residues 562–606 and 613–633; these read VGTT…PRGS and VGPA…QPGA. Basic and acidic residues predominate over residues 634–643; that stretch reads KGERGTKGPK. Residues 651–661 show a composition bias toward low complexity; that stretch reads PTGPVGSAGPA. Gly residues predominate over residues 671–680; that stretch reads GSRGDGGPPG. The segment covering 682–691 has biased composition (low complexity); sequence TGFPGAAGRT. Positions 722-736 are enriched in gly residues; it reads GPVGRGETGAGGPPG. Composition is skewed to low complexity over residues 737-771, 779-792, and 810-825; these read FTGE…LGLP, LPGV…PGPL, and EPGP…ALGP. Residues 835–846 are compositionally biased toward basic and acidic residues; it reads RGDKGEPGEKGP. Residues 921–931 are compositionally biased toward pro residues; that stretch reads PAGPPGPPGPP.

Belongs to the fibrillar collagen family. In terms of assembly, trimers of one alpha 2(I) and two alpha 1(I) chains. Interacts (via C-terminus) with TMEM131 (via PapD-L domain); the interaction is direct and is involved in assembly and TRAPPIII ER-to-Golgi transport complex-dependent secretion of collagen. Prolines at the third position of the tripeptide repeating unit (G-X-Y) are hydroxylated in some or all of the chains. As to expression, expressed in bones.

The protein localises to the secreted. It localises to the extracellular space. It is found in the extracellular matrix. In terms of biological role, type I collagen is a member of group I collagen (fibrillar forming collagen). This is Collagen alpha-2(I) chain from Acratocnus ye (Hispaniolan ground sloth).